The sequence spans 261 residues: Maspardin (261 aa).

An AB hydrolase-1 domain is found at 87–159; it reads FCDGFRKLLD…NSFWLMPAFM (73 aa). A Phosphoserine modification is found at Ser257.

Belongs to the AB hydrolase superfamily. As to quaternary structure, interacts with CD4. Interacts with ALDH16A1.

It localises to the cytoplasm. May play a role as a negative regulatory factor in CD4-dependent T-cell activation. The sequence is that of Maspardin (Spg21) from Rattus norvegicus (Rat).